The sequence spans 212 residues: uncharacterized protein (212 aa).

The S-adenosyl-L-methionine site is built by G53, E74, and D97.

Belongs to the methyltransferase superfamily. YrrT family.

In terms of biological role, could be a S-adenosyl-L-methionine-dependent methyltransferase. This is an uncharacterized protein from Bacillus cereus (strain 03BB102).